The primary structure comprises 78 residues: Large ribosomal subunit protein bL28 (78 aa).

This sequence belongs to the bacterial ribosomal protein bL28 family.

The protein is Large ribosomal subunit protein bL28 of Colwellia psychrerythraea (strain 34H / ATCC BAA-681) (Vibrio psychroerythus).